The chain runs to 391 residues: Nucleosome assembly protein 1-like 1 (391 aa).

Residues 1 to 10 (MADIDNKEQS) are compositionally biased toward basic and acidic residues. A disordered region spans residues 1–32 (MADIDNKEQSELDQDLEDVEEVEEEETGEETK). N-acetylalanine is present on A2. S10 carries the phosphoserine modification. Residues 11–28 (ELDQDLEDVEEVEEEETG) show a composition bias toward acidic residues. 2 positions are modified to phosphothreonine: T62 and T64. S69 carries the phosphoserine modification. The residue at position 116 (K116) is an N6-acetyllysine. Residues 125–150 (YEPTEEECEWKPDEEDEVSEELKEKA) carry the NAP1L motif motif. Residues 131-143 (ECEWKPDEEDEVS) are compositionally biased toward acidic residues. A disordered region spans residues 131–163 (ECEWKPDEEDEVSEELKEKAKIEDEKKDEEKED). The residue at position 143 (S143) is a Phosphoserine. The span at 144–163 (EELKEKAKIEDEKKDEEKED) shows a compositional bias: basic and acidic residues. The Nuclear localization signal signature appears at 273-279 (IKKKQKH). Residues 346 to 376 (AIEDDDDDYDEEGEEADEEGEEEGDEENDPD) show a composition bias toward acidic residues. The interval 346 to 391 (AIEDDDDDYDEEGEEADEEGEEEGDEENDPDYDPKKDQNPAECKQQ) is disordered. Residues E359 and E360 each carry the 5-glutamyl polyglycine modification. The segment covering 377–391 (YDPKKDQNPAECKQQ) has biased composition (basic and acidic residues). C388 is subject to Cysteine methyl ester. A lipid anchor (S-farnesyl cysteine) is attached at C388. Residues 389 to 391 (KQQ) constitute a propeptide, removed in mature form.

This sequence belongs to the nucleosome assembly protein (NAP) family. As to quaternary structure, homodimer. The dimer binds strongly and sequentially to single and double H2A-H2B heterodimers. Interacts with ERCC6; this interaction increases ERCC6 processivity. Interacts with RAD54. Interacts with SETD1A. In terms of processing, polyglycylated by TTLL10 on glutamate residues, resulting in polyglycine chains on the gamma-carboxyl group. Both polyglutamylation and polyglycylation modifications can coexist on the same protein on adjacent residues, and lowering polyglycylation levels increases polyglutamylation, and reciprocally. Post-translationally, polyglutamylated by TTLL4 on glutamate residues, resulting in polyglutamate chains on the gamma-carboxyl group. Both polyglutamylation and polyglycylation modifications can coexist on the same protein on adjacent residues, and lowering polyglycylation levels increases polyglutamylation, and reciprocally. As to expression, highly expressed in the brain (at protein level). High expression in cerebral cortex, not in cerebellar cortex.

The protein localises to the nucleus. It localises to the cytoplasm. The protein resides in the melanosome. Histone chaperone that plays a role in the nuclear import of H2A-H2B and nucleosome assembly. Also participates in several important DNA repair mechanisms: greatly enhances ERCC6-mediated chromatin remodeling which is essential for transcription-coupled nucleotide excision DNA repair. Also stimulates homologous recombination (HR) by RAD51 and RAD54 which is essential in mitotic DNA double strand break (DSB) repair. Plays a key role in the regulation of embryonic neurogenesis. Promotes the proliferation of neural progenitors and inhibits neuronal differentiation during cortical development. Regulates neurogenesis via the modulation of RASSF10; regulates RASSF10 expression by promoting SETD1A-mediated H3K4 methylation at the RASSF10 promoter. This is Nucleosome assembly protein 1-like 1 (Nap1l1) from Mus musculus (Mouse).